A 413-amino-acid chain; its full sequence is Serine hydroxymethyltransferase (413 aa).

(6S)-5,6,7,8-tetrahydrofolate is bound by residues L118 and 122–124 (GHL). An N6-(pyridoxal phosphate)lysine modification is found at K228.

It belongs to the SHMT family. As to quaternary structure, homodimer. It depends on pyridoxal 5'-phosphate as a cofactor.

It is found in the cytoplasm. The catalysed reaction is (6R)-5,10-methylene-5,6,7,8-tetrahydrofolate + glycine + H2O = (6S)-5,6,7,8-tetrahydrofolate + L-serine. Its pathway is one-carbon metabolism; tetrahydrofolate interconversion. The protein operates within amino-acid biosynthesis; glycine biosynthesis; glycine from L-serine: step 1/1. In terms of biological role, catalyzes the reversible interconversion of serine and glycine with tetrahydrofolate (THF) serving as the one-carbon carrier. This reaction serves as the major source of one-carbon groups required for the biosynthesis of purines, thymidylate, methionine, and other important biomolecules. Also exhibits THF-independent aldolase activity toward beta-hydroxyamino acids, producing glycine and aldehydes, via a retro-aldol mechanism. This is Serine hydroxymethyltransferase from Phytoplasma australiense.